The sequence spans 262 residues: High-affinity zinc uptake system membrane protein ZnuB (262 aa).

7 helical membrane passes run 8-28, 54-74, 84-104, 129-149, 179-199, 215-235, and 238-254; these read GWLA…FIVW, INSF…LAWL, TVLN…ISLI, ITIS…WHSI, FTIA…LLII, VIIA…LSVF, and TPAS…LCLI.

It belongs to the ABC-3 integral membrane protein family.

The protein resides in the cell membrane. Its function is as follows. Involved in the high-affinity zinc uptake transport system. The polypeptide is High-affinity zinc uptake system membrane protein ZnuB (znuB) (Buchnera aphidicola subsp. Acyrthosiphon pisum (strain APS) (Acyrthosiphon pisum symbiotic bacterium)).